The primary structure comprises 1164 residues: Hamartin (1164 aa).

A Glycyl lysine isopeptide (Lys-Gly) (interchain with G-Cter in ubiquitin) cross-link involves residue Lys30. Residues 403–787 are mediates interaction with WDR45B; it reads SDDYVHISLP…QIRQLQHDRE (385 aa). Residues 439–571 are disordered; sequence LNDRGSEEPP…ADESPAGDRE (133 aa). Residues 474–487 show a composition bias toward basic and acidic residues; sequence EKDKEEAAISRELS. 5 positions are modified to phosphoserine: Ser487, Ser505, Ser511, Ser521, and Ser598. Positions 513–530 are enriched in polar residues; that stretch reads PGSQRKTHSAASSSQGAS. A coiled-coil region spans residues 721–997; sequence RKVIKAAALE…AAEERLDCCN (277 aa). A disordered region spans residues 1006-1085; it reads GHNEEASGHN…TTVGSLPSSK (80 aa). Positions 1007 to 1020 are enriched in basic and acidic residues; the sequence is HNEEASGHNGETKT. Residues 1073-1085 show a composition bias toward polar residues; sequence SIPTTVGSLPSSK. Position 1100 is a phosphoserine (Ser1100). Residues 1131–1164 form a disordered region; that stretch reads IPLNLDGPHPSPPTPDSVGQLHIMDYNETHHEHS. The segment covering 1155-1164 has biased composition (basic and acidic residues); it reads DYNETHHEHS.

Component of the TSC-TBC complex (also named Rhebulator complex), composed of 2 molecules of TSC1, 2 molecules of TSC2 and 1 molecule of TBC1D7. Probably forms a complex composed of chaperones HSP90 and HSP70, co-chaperones STIP1/HOP, CDC37, PPP5C, PTGES3/p23, TSC1 and client protein TSC2. Forms a complex composed of chaperones HSP90 and HSP70, co-chaperones CDC37, PPP5C, TSC1 and client protein TSC2, CDK4, AKT, RAF1 and NR3C1; this complex does not contain co-chaperones STIP1/HOP and PTGES3/p23. Forms a complex containing HSP90AA1, TSC1 and TSC2; TSC1 is required to recruit TCS2 to the complex. Interacts (via C-terminus) with the closed form of HSP90AA1 (via the middle domain and TPR repeat-binding motif). Interacts with DOCK7. Interacts with FBXW5. Interacts with WDR45B. Interacts with RPAP3 and URI1. Phosphorylation at Ser-505 does not affect interaction with TSC2. Post-translationally, 'Lys-63'-linked ubiquitinated at Lys-30 by PELI1; the ubiquitination promotes TSC1/TSC2 complex stability. In terms of tissue distribution, highly expressed in skeletal muscle, followed by heart, brain, placenta, pancreas, lung, liver and kidney. Also expressed in embryonic kidney cells.

The protein localises to the lysosome membrane. It is found in the cytoplasm. It localises to the cytosol. Non-catalytic component of the TSC-TBC complex, a multiprotein complex that acts as a negative regulator of the canonical mTORC1 complex, an evolutionarily conserved central nutrient sensor that stimulates anabolic reactions and macromolecule biosynthesis to promote cellular biomass generation and growth. The TSC-TBC complex acts as a GTPase-activating protein (GAP) for the small GTPase RHEB, a direct activator of the protein kinase activity of mTORC1. In absence of nutrients, the TSC-TBC complex inhibits mTORC1, thereby preventing phosphorylation of ribosomal protein S6 kinase (RPS6KB1 and RPS6KB2) and EIF4EBP1 (4E-BP1) by the mTORC1 signaling. The TSC-TBC complex is inactivated in response to nutrients, relieving inhibition of mTORC1. Within the TSC-TBC complex, TSC1 stabilizes TSC2 and prevents TSC2 self-aggregation. Acts as a tumor suppressor. Involved in microtubule-mediated protein transport via its ability to regulate mTORC1 signaling. Also acts as a co-chaperone for HSP90AA1 facilitating HSP90AA1 chaperoning of protein clients such as kinases, TSC2 and glucocorticoid receptor NR3C1. Increases ATP binding to HSP90AA1 and inhibits HSP90AA1 ATPase activity. Competes with the activating co-chaperone AHSA1 for binding to HSP90AA1, thereby providing a reciprocal regulatory mechanism for chaperoning of client proteins. Recruits TSC2 to HSP90AA1 and stabilizes TSC2 by preventing the interaction between TSC2 and ubiquitin ligase HERC1. This chain is Hamartin, found in Homo sapiens (Human).